A 624-amino-acid chain; its full sequence is Kelch-like ECH-associated protein 1 (624 aa).

S-(2-succinyl)cysteine is present on C38. The BTB domain maps to 77 to 149 (CDVTLQVKYQ…AYTASISMGE (73 aa)). An N5-[4-(S-L-cysteinyl)-5-methyl-1H-imidazol-2-yl]-L-ornithine (Arg-Cys) (interchain with C-151 in KEAP1) cross-link involves residue R135. S-(2-succinyl)cysteine occurs at positions 151 and 241. C151 carries the post-translational modification S-(2,3-dicarboxypropyl)cysteine; alternate. S-nitrosocysteine; alternate is present on C151. Residue C151 forms an N5-[4-(S-L-cysteinyl)-5-methyl-1H-imidazol-2-yl]-L-ornithine (Cys-Arg) (interchain with R-135 in KEAP1) linkage. The 103-residue stretch at 184–286 (AIGIANFAEQ…TPNFLQMQLQ (103 aa)) folds into the BACK domain. C257 and C273 each carry S-(2,3-dicarboxypropyl)cysteine. S-(2-succinyl)cysteine occurs at positions 288 and 319. S-(2,3-dicarboxypropyl)cysteine; alternate is present on C288. Kelch repeat units follow at residues 327–372 (LIYT…VVGG), 373–423 (LLYA…VIDG), 424–470 (HIYA…VLNR), 471–517 (LLYA…VLHN), 518–564 (CIYA…VHQG), and 565–611 (RIYV…VTME). C434 is modified (S-cGMP-cysteine). An S-(2-succinyl)cysteine modification is found at C613.

Belongs to the KEAP1 family. In terms of assembly, component of the BCR(KEAP1) E3 ubiquitin ligase complex, at least composed of 2 molecules of CUL3, 2 molecules of KEAP1, and RBX1. Interacts with NFE2L2/NRF2; the interaction is direct. Forms a ternary complex with NFE2L2/NRF2 and PGAM5. Interacts with (phosphorylated) SQSTM1/p62; the interaction is direct and inactivates the BCR(KEAP1) complex by sequestering it in inclusion bodies, promoting its degradation. Interacts with NFE2L1. Interacts with BPTF and PTMA. Interacts with MAP1LC3B. Interacts indirectly with ENC1. Interacts with SESN1 and SESN2. Interacts with HSP90AA1 and HSP90AB1. Interacts with PGCKA1; this interaction prevents the ubiquitination of KEAP1 by TRIM25, thus protecting KEAP1 from degradation. Post-translationally, non-enzymatic covalent modifications of reactive cysteines by electrophile metabolites inactivate the BCR(KEAP1) complex. Accumulation of fumarate promotes the formation of cysteine S-succination (S-(2-succinyl)cysteine), leading to inactivate the BCR(KEAP1) complex and promote NFE2L2/NRF2 nuclear accumulation and activation. Nitric oxide-dependent 8-Nitro-cGMP formation promotes cysteine guanylation (S-cGMP-cysteine), leading to NFE2L2/NRF2 nuclear accumulation and activation. Itaconate, an anti-inflammatory metabolite generated in response to lipopolysaccharide, alkylates cysteines, activating NFE2L2/NRF2. Methylglyoxal, a reactive metabolite that accumulates when the glycolytic enzyme PGK1 is inhibited, promotes formation of a methylimidazole cross-link between proximal Cys-151 and Arg-135 on another KEAP1 molecule, resulting in an inactive dimer that inactivates the BCR(KEAP1) complex. Degraded via a proteasomal-independent process during selective autophagy: interaction with phosphorylated SQSTM1/p62 sequesters KEAP1 in inclusion bodies, leading to its degradation. In terms of processing, auto-ubiquitinated by the BCR(KEAP1) complex. Quinone-induced oxidative stress, but not sulforaphane, increases its ubiquitination. Ubiquitination and subsequent degradation is most pronounced following prolonged exposure of cells to oxidative stress, particularly in glutathione-deficient cells that are highly susceptible to oxidative stress. Deubiquitinated by USP25; leading to stabilization. Ubiquitinated by TRIM25; leading to degradation upon ER stress.

The protein localises to the cytoplasm. It localises to the nucleus. The protein operates within protein modification; protein ubiquitination. Ubiquitin ligase activity of the BCR(KEAP1) complex is inhibited by oxidative stress and electrophile metabolites such as sulforaphane. Electrophile metabolites react with reactive cysteine residues in KEAP1 and trigger non-enzymatic covalent modifications of these cysteine residues, leading to inactivate the ubiquitin ligase activity of the BCR(KEAP1) complex. Selective autophagy also inactivates the BCR(KEAP1) complex via interaction between KEAP1 and SQSTM1/p62, which sequesters the complex in inclusion bodies and promotes its degradation. Its function is as follows. Substrate-specific adapter of a BCR (BTB-CUL3-RBX1) E3 ubiquitin ligase complex that regulates the response to oxidative stress by targeting NFE2L2/NRF2 for ubiquitination. KEAP1 acts as a key sensor of oxidative and electrophilic stress: in normal conditions, the BCR(KEAP1) complex mediates ubiquitination and degradation of NFE2L2/NRF2, a transcription factor regulating expression of many cytoprotective genes. In response to oxidative stress, different electrophile metabolites trigger non-enzymatic covalent modifications of highly reactive cysteine residues in KEAP1, leading to inactivate the ubiquitin ligase activity of the BCR(KEAP1) complex, promoting NFE2L2/NRF2 nuclear accumulation and expression of phase II detoxifying enzymes. In response to selective autophagy, KEAP1 is sequestered in inclusion bodies following its interaction with SQSTM1/p62, leading to inactivation of the BCR(KEAP1) complex and activation of NFE2L2/NRF2. The BCR(KEAP1) complex also mediates ubiquitination of SQSTM1/p62, increasing SQSTM1/p62 sequestering activity and degradation. The BCR(KEAP1) complex also targets BPTF and PGAM5 for ubiquitination and degradation by the proteasome. The sequence is that of Kelch-like ECH-associated protein 1 from Pongo abelii (Sumatran orangutan).